The sequence spans 72 residues: UPF0270 protein ESA_04379 (72 aa).

This sequence belongs to the UPF0270 family.

The sequence is that of UPF0270 protein ESA_04379 from Cronobacter sakazakii (strain ATCC BAA-894) (Enterobacter sakazakii).